A 228-amino-acid polypeptide reads, in one-letter code: Large ribosomal subunit protein uL3 (228 aa).

Belongs to the universal ribosomal protein uL3 family. Part of the 50S ribosomal subunit. Forms a cluster with proteins L14 and L19.

One of the primary rRNA binding proteins, it binds directly near the 3'-end of the 23S rRNA, where it nucleates assembly of the 50S subunit. The sequence is that of Large ribosomal subunit protein uL3 from Leuconostoc mesenteroides subsp. mesenteroides (strain ATCC 8293 / DSM 20343 / BCRC 11652 / CCM 1803 / JCM 6124 / NCDO 523 / NBRC 100496 / NCIMB 8023 / NCTC 12954 / NRRL B-1118 / 37Y).